The chain runs to 193 residues: Large ribosomal subunit protein uL18 (193 aa).

Belongs to the universal ribosomal protein uL18 family. Part of the 50S ribosomal subunit. Contacts the 5S and 23S rRNAs.

This is one of the proteins that bind and probably mediate the attachment of the 5S RNA into the large ribosomal subunit, where it forms part of the central protuberance. This chain is Large ribosomal subunit protein uL18, found in Methanococcus maripaludis (strain DSM 14266 / JCM 13030 / NBRC 101832 / S2 / LL).